A 309-amino-acid chain; its full sequence is Ornithine carbamoyltransferase (309 aa).

Residues 56–59 (STRT), Q83, R107, and 134–137 (HPCQ) each bind carbamoyl phosphate. L-ornithine contacts are provided by residues N165, D223, and 227–228 (SM). Carbamoyl phosphate contacts are provided by residues 263-264 (CL) and R291.

The protein belongs to the aspartate/ornithine carbamoyltransferase superfamily. OTCase family.

The protein resides in the cytoplasm. The catalysed reaction is carbamoyl phosphate + L-ornithine = L-citrulline + phosphate + H(+). Its pathway is amino-acid biosynthesis; L-arginine biosynthesis; L-arginine from L-ornithine and carbamoyl phosphate: step 1/3. Functionally, reversibly catalyzes the transfer of the carbamoyl group from carbamoyl phosphate (CP) to the N(epsilon) atom of ornithine (ORN) to produce L-citrulline. The polypeptide is Ornithine carbamoyltransferase (Burkholderia mallei (strain ATCC 23344)).